Reading from the N-terminus, the 491-residue chain is Glycogen synthase (491 aa).

Arg-20 is an ADP-alpha-D-glucose binding site.

This sequence belongs to the glycosyltransferase 1 family. Bacterial/plant glycogen synthase subfamily.

The enzyme catalyses [(1-&gt;4)-alpha-D-glucosyl](n) + ADP-alpha-D-glucose = [(1-&gt;4)-alpha-D-glucosyl](n+1) + ADP + H(+). It functions in the pathway glycan biosynthesis; glycogen biosynthesis. Functionally, synthesizes alpha-1,4-glucan chains using ADP-glucose. This Prosthecochloris aestuarii (strain DSM 271 / SK 413) protein is Glycogen synthase.